The chain runs to 355 residues: 3-isopropylmalate dehydrogenase (355 aa).

4 residues coordinate substrate: R98, R108, R132, and D223. The Mg(2+) site is built by D223, D247, and D251. 283 to 295 (GSAPDIAGQQKAD) is an NAD(+) binding site.

Belongs to the isocitrate and isopropylmalate dehydrogenases family. LeuB type 2 subfamily. As to quaternary structure, homodimer. The cofactor is Mg(2+). Mn(2+) is required as a cofactor.

It is found in the cytoplasm. The enzyme catalyses (2R,3S)-3-isopropylmalate + NAD(+) = 4-methyl-2-oxopentanoate + CO2 + NADH. Its pathway is amino-acid biosynthesis; L-leucine biosynthesis; L-leucine from 3-methyl-2-oxobutanoate: step 3/4. In terms of biological role, catalyzes the oxidation of 3-carboxy-2-hydroxy-4-methylpentanoate (3-isopropylmalate) to 3-carboxy-4-methyl-2-oxopentanoate. The product decarboxylates to 4-methyl-2 oxopentanoate. This chain is 3-isopropylmalate dehydrogenase, found in Clavibacter sepedonicus (Clavibacter michiganensis subsp. sepedonicus).